The primary structure comprises 371 residues: Chitin deacetylase (371 aa).

The signal sequence occupies residues 1-20 (MLCRLFTLFITAALACCVAA). The tract at residues 73–112 (PKPEPEPTAVPTMAPEPTTVPPTEPSGTYPPETTPTVEPT) is disordered. Low complexity-rich tracts occupy residues 79–89 (PTAVPTMAPEP) and 102–112 (PPETTPTVEPT). Cys164 and Cys358 are oxidised to a cystine. N-linked (GlcNAc...) asparagine glycosylation is present at Asn167. The 186-residue stretch at 168–353 (GTIALTFDDG…EIKKRGLRAV (186 aa)) folds into the NodB homology domain. The active-site Proton acceptor is the Asp175. Asp175 is an acetate binding site. Positions 176, 228, and 232 each coordinate Co(2+). N-linked (GlcNAc...) asparagine glycosylation is present at Asn239. Tyr270 is an acetate binding site. Catalysis depends on His327, which acts as the Proton donor.

The protein belongs to the polysaccharide deacetylase family. Requires Co(2+) as cofactor.

It carries out the reaction [(1-&gt;4)-N-acetyl-beta-D-glucosaminyl](n) + n H2O = chitosan + n acetate. Hydrolyzes the N-acetamido groups of N-acetyl-D-glucosamine residues in chitin to form chitosan and acetate. This Arthroderma benhamiae (strain ATCC MYA-4681 / CBS 112371) (Trichophyton mentagrophytes) protein is Chitin deacetylase.